The sequence spans 425 residues: Dihydroorotase (425 aa).

His-61 and His-63 together coordinate Zn(2+). Substrate-binding positions include 63–65 and Asn-95; that span reads HLR. Positions 153, 180, and 233 each coordinate Zn(2+). Asn-279 contacts substrate. Zn(2+) is bound at residue Asp-306. The active site involves Asp-306. His-310 provides a ligand contact to substrate.

It belongs to the metallo-dependent hydrolases superfamily. DHOase family. Class I DHOase subfamily. Zn(2+) serves as cofactor.

The catalysed reaction is (S)-dihydroorotate + H2O = N-carbamoyl-L-aspartate + H(+). It participates in pyrimidine metabolism; UMP biosynthesis via de novo pathway; (S)-dihydroorotate from bicarbonate: step 3/3. Its function is as follows. Catalyzes the reversible cyclization of carbamoyl aspartate to dihydroorotate. The sequence is that of Dihydroorotase from Geobacter sulfurreducens (strain ATCC 51573 / DSM 12127 / PCA).